The sequence spans 190 residues: RNA-binding protein OPG065 (190 aa).

A Z-binding domain is found at 5–70 (YIDERSDAEI…DIPPRWFMTT (66 aa)). One can recognise a DRBM domain in the interval 117-184 (NPVTIINEYC…AKLAVDKLLG (68 aa)).

The protein belongs to the orthopoxvirus OPG065 family. Interacts with host G1P2/ISG15. Interacts with host EIF2AK2/PKR. Interacts with host ZBP1.

RNA-binding protein that plays a role in the inhibition of multiple cellular antiviral responses activated by double-stranded RNA (dsRNA), such as inhibition of PKR activation, necroptosis, and IFN-mediated antiviral activities. Recognizes and binds Z-RNA structures via its Z-binding domain and dsRNA via its DRBM domain: RNA-binding activity is required to escape host ZBP1-dependent necroptosis. Mechanistically, the Z-binding domain binds Z-RNAs that are produced during vaccinia virus infection, thereby competing with Z-RNA detection by host ZBP1, suppressing ZBP1-dependent necroptosis. Acts as a key inhibitor of the interferon response by blocking the phosphorylation and subsequent activation of IRF3 and IRF7 kinases that are required for interferon-alpha gene expression. Inhibits NF-kappa-B activation and the ubiquitin-like protein ISG15, which is an early antiviral protein. The binding with host ISG15 subsequently blocks host ISGylation. The sequence is that of RNA-binding protein OPG065 (OPG065) from Homo sapiens (Human).